The following is a 310-amino-acid chain: tRNA dimethylallyltransferase (310 aa).

14–21 (GPTASGKS) is an ATP binding site. 16 to 21 (TASGKS) contacts substrate. Interaction with substrate tRNA regions lie at residues 39-42 (DSMQ) and 163-167 (QRIVR).

This sequence belongs to the IPP transferase family. As to quaternary structure, monomer. Mg(2+) serves as cofactor.

The enzyme catalyses adenosine(37) in tRNA + dimethylallyl diphosphate = N(6)-dimethylallyladenosine(37) in tRNA + diphosphate. Its function is as follows. Catalyzes the transfer of a dimethylallyl group onto the adenine at position 37 in tRNAs that read codons beginning with uridine, leading to the formation of N6-(dimethylallyl)adenosine (i(6)A). This is tRNA dimethylallyltransferase from Brucella ovis (strain ATCC 25840 / 63/290 / NCTC 10512).